The following is a 518-amino-acid chain: Histone deacetylase 1 (518 aa).

The histone deacetylase stretch occupies residues 22-333; sequence RRVCYFYDAE…WCYETGVALG (312 aa). Histidine 153 (proton donor/acceptor) is an active-site residue. Zn(2+) contacts are provided by aspartate 188, histidine 190, and aspartate 276. Residues 387 to 518 are disordered; it reads HAPSVQFQER…QDQPSVHQKT (132 aa). A compositionally biased stretch (acidic residues) spans 401–412; it reads ELPEQDEDQEDP. Residues 413 to 435 are compositionally biased toward basic and acidic residues; sequence DERHHADSDVEMDDVKPLDDSGR. A compositionally biased stretch (polar residues) spans 503–518; the sequence is DNSNKLQDQPSVHQKT.

Belongs to the histone deacetylase family. HD Type 1 subfamily. Interacts with TPR3. The cofactor is Zn(2+). In terms of tissue distribution, expressed in roots and leaves.

It localises to the nucleus. It catalyses the reaction N(6)-acetyl-L-lysyl-[histone] + H2O = L-lysyl-[histone] + acetate. Functionally, responsible for the deacetylation of lysine residues on the N-terminal part of the core histones (H2A, H2B, H3 and H4). Histone deacetylation gives a tag for epigenetic repression and plays an important role in transcriptional regulation, cell cycle progression and developmental events. Histone deacetylases act via the formation of large multiprotein complexes. Negatively regulates the expression of the NAC48/NAC6 gene that controls root growth in seedlings. Epigenetically represses the expression of NAC48/NAC6 by deacetylating 'Lys-9' (H3K9ac), 'Lys-14' (H3K14ac) and 'Lys-18' (H3K18ac) of histone H3, and 'Lys-5' (H4K5ac), 'Lys-12' (H4K12ac) and 'Lys-16' (H4K16ac) of histone H4. Functions in the regulation of gene expression in the whole genome. Acts as a chromatin remodeling regulator to promote the formation of a repressive chromatin state. Functions with MODD via its interaction with TPR3, to down-regulates the histone acetylation level at BZIP46 target genes. BZIP46 is a positive regulator of abscisic acid (ABA) signaling and drought stress tolerance. This Oryza sativa subsp. japonica (Rice) protein is Histone deacetylase 1.